The chain runs to 125 residues: Thioredoxin H-type (125 aa).

The Thioredoxin domain occupies 2–112 (AEGNVFACHS…LERKVAALAA (111 aa)). Residues Cys-38 and Cys-41 each act as nucleophile in the active site. An intrachain disulfide couples Cys-38 to Cys-41.

The protein belongs to the thioredoxin family. Plant H-type subfamily.

Its subcellular location is the cytoplasm. Functionally, participates in various redox reactions through the reversible oxidation of the active center dithiol to a disulfide. The H form is known to activate a number of cytosolic enzymes. In Picea mariana (Black spruce), this protein is Thioredoxin H-type (SB09).